The chain runs to 317 residues: Transaldolase (317 aa).

K132 (schiff-base intermediate with substrate) is an active-site residue.

This sequence belongs to the transaldolase family. Type 1 subfamily. As to quaternary structure, homodimer.

It is found in the cytoplasm. The catalysed reaction is D-sedoheptulose 7-phosphate + D-glyceraldehyde 3-phosphate = D-erythrose 4-phosphate + beta-D-fructose 6-phosphate. The protein operates within carbohydrate degradation; pentose phosphate pathway; D-glyceraldehyde 3-phosphate and beta-D-fructose 6-phosphate from D-ribose 5-phosphate and D-xylulose 5-phosphate (non-oxidative stage): step 2/3. Transaldolase is important for the balance of metabolites in the pentose-phosphate pathway. This is Transaldolase from Shewanella amazonensis (strain ATCC BAA-1098 / SB2B).